The following is a 129-amino-acid chain: Glycine cleavage system H protein (129 aa).

The Lipoyl-binding domain occupies 23–104 (TATIGITQHA…AYAAWLFRLK (82 aa)). An N6-lipoyllysine modification is found at lysine 64.

Belongs to the GcvH family. The glycine cleavage system is composed of four proteins: P, T, L and H. (R)-lipoate serves as cofactor.

Its function is as follows. The glycine cleavage system catalyzes the degradation of glycine. The H protein shuttles the methylamine group of glycine from the P protein to the T protein. This Nitrosospira multiformis (strain ATCC 25196 / NCIMB 11849 / C 71) protein is Glycine cleavage system H protein.